The primary structure comprises 830 residues: MQERKYNPKDIESKWQQFWTEHKSFEPFDIDIATSDSMKKKYILSMFPYPSGAIHMGHVRNYCIGDALARNYRQNGYNVLHPMGWDAFGMPAENAAIKHKTHPKTWTYSNIDTMRKELATLGLSFSKEREFATSDAIYTRFEQEFFIKMWERGLIYRKEAYLNWCPKDKTILANEQVIEGKCWRCDTPVVQKQMFQYYIKITDYADELLECLNKLEGHWPSQVLSMQRNWIGKSKGLSFTFDFSVDSLQKLGNGKVKLEVFTTRPDTIYGVTYCAVAPEHPIVQQLIENKSLDESVIKSIEAIKNTTARARAMSEKVGFDLGVYVIHPLTQEKLPVWVANFVLMDYGSGAVMSVPMHDERDFEFAKTYALPFKCVLTKEIDGEEPTQEICAAYEEGFLINSGEFSGMSSSQAKERIIAHFENASIGKGITNYRLRDWGVSRQRYWGAPIPMVHCQSCGIVPEKIENLPITLPEDVVIDGEGNPLDKHLVWKDCLCPKCGKKAQRESDTMDTFIQSSWYFLRYSTPRKLWEKQAFDKESLTYWLNVDEYIGGIEHAILHLLYARFWTKVLRDLGYIEIDEPFANLLTQGMVLKDGAKMSKSKGNIVNPNELIAHYGADTARLFVLFAAPPTRELEWNDKAVEGAHRFLKRLWERAEHIESCTQKPHINHKTLQKNEQYARQKVYEALQKSNEIFSKKQSGYAFNTLIAASMEAFNALNEQENPLVWTEGYFVLLHILEPIVPHICWELSEQYFRRCNFAPLSVDKDALTKESVIYAITINGKKRAEVEMPLGLSKEEIIIQAKESVPKWLEGVEILKEIIVPNKLVNLVVK.

The short motif at 48–58 (PYPSGAIHMGH) is the 'HIGH' region element. The short motif at 596–600 (KMSKS) is the 'KMSKS' region element. Lys599 serves as a coordination point for ATP.

It belongs to the class-I aminoacyl-tRNA synthetase family.

It is found in the cytoplasm. It carries out the reaction tRNA(Leu) + L-leucine + ATP = L-leucyl-tRNA(Leu) + AMP + diphosphate. This is Leucine--tRNA ligase from Helicobacter hepaticus (strain ATCC 51449 / 3B1).